Reading from the N-terminus, the 239-residue chain is uncharacterized protein (239 aa).

3 helical membrane-spanning segments follow: residues L125–Y144, I149–L171, and S197–F216.

The protein resides in the cell membrane. This is an uncharacterized protein from Aquifex aeolicus (strain VF5).